The chain runs to 285 residues: Shikimate dehydrogenase (NADP(+)) (285 aa).

Shikimate-binding positions include 20–22 and Ser-67; that span reads SIS. The Proton acceptor role is filled by Lys-71. Shikimate-binding residues include Asn-92 and Asp-107. NADP(+)-binding positions include 129-133 and Ile-227; that span reads GAGGA. Tyr-229 serves as a coordination point for shikimate. Gly-250 provides a ligand contact to NADP(+).

This sequence belongs to the shikimate dehydrogenase family. In terms of assembly, homodimer.

The enzyme catalyses shikimate + NADP(+) = 3-dehydroshikimate + NADPH + H(+). The protein operates within metabolic intermediate biosynthesis; chorismate biosynthesis; chorismate from D-erythrose 4-phosphate and phosphoenolpyruvate: step 4/7. In terms of biological role, involved in the biosynthesis of the chorismate, which leads to the biosynthesis of aromatic amino acids. Catalyzes the reversible NADPH linked reduction of 3-dehydroshikimate (DHSA) to yield shikimate (SA). This is Shikimate dehydrogenase (NADP(+)) from Streptococcus thermophilus (strain ATCC BAA-491 / LMD-9).